Consider the following 8515-residue polypeptide: Nonribosomal peptide synthetase 8 (8515 aa).

Adenylation stretches follow at residues 59–736 and 1163–1705; these read REHH…YRCS and AKLS…EWVE. The segment at 587–1159 is condensation 1; sequence RRVVQWLENL…TVGEVALVGD (573 aa). Positions 615 to 691 constitute a Carrier 1 domain; the sequence is EPETAMERRL…ELAPRVKVAE (77 aa). Ser-652 carries the O-(pantetheine 4'-phosphoryl)serine modification. The 77-residue stretch at 1732 to 1808 folds into the Carrier 2 domain; that stretch reads RGLTPTETVI…KLGRHADHSS (77 aa). The residue at position 1769 (Ser-1769) is an O-(pantetheine 4'-phosphoryl)serine. Positions 1830-2273 are epimerase 1; the sequence is LSPIQQWFFE…TLYDCPLAAL (444 aa). Residues 2301–2709 are condensation 2; the sequence is SHIQEGILLS…RSPEAVLHDL (409 aa). The interval 2733–3266 is adenylation 3; it reads QCLHWLIEQW…RMILSWLSEP (534 aa). Residues 3286–3362 enclose the Carrier 3 domain; the sequence is TTLGPVEKQM…KVTPRTISLS (77 aa). Ser-3323 bears the O-(pantetheine 4'-phosphoryl)serine mark. The interval 3406–3819 is condensation 3; sequence SPMQEGILLA…DNSGCSVKTV (414 aa). The Carrier 4 domain occupies 3857-3933; the sequence is EPTNLIALTV…EVFEHARFSD (77 aa). O-(pantetheine 4'-phosphoryl)serine is present on Ser-3894. The segment at 3953 to 4392 is epimerase 2; that stretch reads LSPIQKLHFH…TPSDFQLLSL (440 aa). The segment at 4420-4823 is condensation 4; sequence PCSPMQEGIL…ARPRARLGTI (404 aa). Residues 4837–5363 are adenylation 4; the sequence is WNEQARRPVV…RKVNKWLESF (527 aa). The 77-residue stretch at 5385 to 5461 folds into the Carrier 5 domain; the sequence is PPLTPIQQTI…SLAACATAII (77 aa). Ser-5422 carries the post-translational modification O-(pantetheine 4'-phosphoryl)serine. A condensation 5 region spans residues 5508–5923; it reads SPMQEGILFS…SLVDHLSLCS (416 aa). The adenylation 5 stretch occupies residues 5941–6459; that stretch reads ELRQCLHELI…GKVDRQALRR (519 aa). Residues 6482 to 6558 form the Carrier 6 domain; that stretch reads PISTAEEQQM…DLATLLESPA (77 aa). Ser-6519 is modified (O-(pantetheine 4'-phosphoryl)serine). Residues 6606–6992 are condensation 6; sequence CTPLQESLMA…SQMKSVMGTL (387 aa). The tract at residues 7030–7544 is adenylation 6; sequence VEDLIISRAQ…SSGKLARKGV (515 aa). Residues 7575-7651 enclose the Carrier 7 domain; the sequence is IASSSVERAI…HLASREDLTA (77 aa). O-(pantetheine 4'-phosphoryl)serine is present on Ser-7612. The segment at 7670–8119 is epimerase 3; the sequence is LTPIQRFFFC…DYPRARLDYT (450 aa). Residues 8164 to 8504 are condensation 7; the sequence is HFIWKIAGTK…DPTSPLQFAD (341 aa). Over residues 8488 to 8500 the composition is skewed to polar residues; the sequence is AVNSVSSDPTSPL. Positions 8488–8515 are disordered; sequence AVNSVSSDPTSPLQFADGQDPMPVSHQP.

This sequence belongs to the NRP synthetase family.

In terms of biological role, nonribosomal peptide synthesis (NRPS) is a key mechanism responsible for the biosynthesis of bioactive metabolites which are potentially contributing to organismal virulence. However, contarary to other nonribosomal peptide synthases, NRPS8 does not encode a secreted peptide, but has more a structural role since it is involved in germ tube formation. This Aspergillus fumigatus (strain ATCC MYA-4609 / CBS 101355 / FGSC A1100 / Af293) (Neosartorya fumigata) protein is Nonribosomal peptide synthetase 8 (NRPS8).